We begin with the raw amino-acid sequence, 632 residues long: Extracellular metalloproteinase 2 (632 aa).

The first 19 residues, 1 to 19 (MHGLLLAGLAAALPLGVAG), serve as a signal peptide directing secretion. A propeptide spanning residues 20–244 (LPARQQSGLS…VHNVVDYVAS (225 aa)) is cleaved from the precursor. A glycan (N-linked (GlcNAc...) asparagine) is linked at N270. H429 serves as a coordination point for Zn(2+). E430 is a catalytic residue. H433 is a binding site for Zn(2+).

The protein belongs to the peptidase M36 family. The cofactor is Zn(2+).

Its subcellular location is the secreted. Functionally, secreted metalloproteinase probably acting as a virulence factor. The chain is Extracellular metalloproteinase 2 (MEP2) from Trichophyton rubrum (Athlete's foot fungus).